The primary structure comprises 339 residues: MANLDKYTETFKMGSNSTSTAEIYCNVTNVKFQYSLYATTYILIFIPGLLANSAALWVLCRFISKKNKAIIFMINLSVADLAHVLSLPLRIYYYISHHWPFQRALCLLCFYLKYLNMYASICFLTCISLQRCFFLLKPFRARDWKRRYDVGISAAIWIVVGTACLPFPILRSTDLNNNKSCFADLGYKQMNAVALVGMITVAELAGFVIPVIIIAWCTWKTTISLRQPPMAFQGISERQKALRMVFMCAAVFFICFTPYHINFIFYTMVKETIISSCPVVRIALYFHPFCLCLASLCCLLDPILYYFMASEFRDQLSRHGSSVTRSRLMSKESGSSMIG.

The Extracellular portion of the chain corresponds to 1–39 (MANLDKYTETFKMGSNSTSTAEIYCNVTNVKFQYSLYAT). N-linked (GlcNAc...) asparagine glycans are attached at residues Asn16 and Asn26. A helical transmembrane segment spans residues 40–60 (TYILIFIPGLLANSAALWVLC). Residues 61–68 (RFISKKNK) are Cytoplasmic-facing. Residues 69–89 (AIIFMINLSVADLAHVLSLPL) form a helical membrane-spanning segment. Residues 90–103 (RIYYYISHHWPFQR) are Extracellular-facing. A helical membrane pass occupies residues 104–124 (ALCLLCFYLKYLNMYASICFL). A disulfide bond links Cys106 and Cys181. Residues 125 to 149 (TCISLQRCFFLLKPFRARDWKRRYD) are Cytoplasmic-facing. A helical transmembrane segment spans residues 150 to 170 (VGISAAIWIVVGTACLPFPIL). At 171 to 193 (RSTDLNNNKSCFADLGYKQMNAV) the chain is on the extracellular side. Asn178 carries N-linked (GlcNAc...) asparagine glycosylation. The helical transmembrane segment at 194 to 214 (ALVGMITVAELAGFVIPVIII) threads the bilayer. Over 215-244 (AWCTWKTTISLRQPPMAFQGISERQKALRM) the chain is Cytoplasmic. A helical transmembrane segment spans residues 245–265 (VFMCAAVFFICFTPYHINFIF). The Extracellular segment spans residues 266–288 (YTMVKETIISSCPVVRIALYFHP). The chain crosses the membrane as a helical span at residues 289–309 (FCLCLASLCCLLDPILYYFMA). Residues 310–339 (SEFRDQLSRHGSSVTRSRLMSKESGSSMIG) are Cytoplasmic-facing.

Belongs to the G-protein coupled receptor 1 family. In terms of tissue distribution, weakly expressed in blood leukocytes.

Its subcellular location is the cell membrane. Its function is as follows. Putative receptor for purines coupled to G-proteins. This chain is Putative P2Y purinoceptor 10 (P2RY10), found in Homo sapiens (Human).